A 360-amino-acid polypeptide reads, in one-letter code: GTP 3',8-cyclase 2 (360 aa).

One can recognise a Radical SAM core domain in the interval 33–259; that stretch reads TFGRVANDLR…PDPAPRGSAP (227 aa). Residue arginine 42 participates in GTP binding. [4Fe-4S] cluster-binding residues include cysteine 49 and cysteine 53. Residue tyrosine 55 coordinates S-adenosyl-L-methionine. Cysteine 56 contributes to the [4Fe-4S] cluster binding site. Arginine 93 serves as a coordination point for GTP. An S-adenosyl-L-methionine-binding site is contributed by glycine 97. Residue threonine 124 coordinates GTP. Serine 148 serves as a coordination point for S-adenosyl-L-methionine. Lysine 185 serves as a coordination point for GTP. S-adenosyl-L-methionine is bound at residue methionine 219. The [4Fe-4S] cluster site is built by cysteine 287 and cysteine 290. 292 to 294 lines the GTP pocket; it reads RTR. Position 304 (cysteine 304) interacts with [4Fe-4S] cluster.

The protein belongs to the radical SAM superfamily. MoaA family. In terms of assembly, monomer and homodimer. [4Fe-4S] cluster is required as a cofactor.

It carries out the reaction GTP + AH2 + S-adenosyl-L-methionine = (8S)-3',8-cyclo-7,8-dihydroguanosine 5'-triphosphate + 5'-deoxyadenosine + L-methionine + A + H(+). The protein operates within cofactor biosynthesis; molybdopterin biosynthesis. Its function is as follows. Catalyzes the cyclization of GTP to (8S)-3',8-cyclo-7,8-dihydroguanosine 5'-triphosphate. This chain is GTP 3',8-cyclase 2, found in Mycobacterium bovis (strain ATCC BAA-935 / AF2122/97).